A 400-amino-acid polypeptide reads, in one-letter code: Acetate kinase (400 aa).

Residue asparagine 10 coordinates Mg(2+). Residue lysine 17 participates in ATP binding. Arginine 91 is a binding site for substrate. Aspartate 150 functions as the Proton donor/acceptor in the catalytic mechanism. Residues 210–214 (HLGNG), 285–287 (DCR), and 333–337 (GIGEN) each bind ATP. Glutamate 387 contacts Mg(2+).

This sequence belongs to the acetokinase family. Homodimer. Requires Mg(2+) as cofactor. Mn(2+) serves as cofactor.

The protein localises to the cytoplasm. The catalysed reaction is acetate + ATP = acetyl phosphate + ADP. It functions in the pathway metabolic intermediate biosynthesis; acetyl-CoA biosynthesis; acetyl-CoA from acetate: step 1/2. Its function is as follows. Catalyzes the formation of acetyl phosphate from acetate and ATP. Can also catalyze the reverse reaction. This Escherichia coli O157:H7 protein is Acetate kinase.